Here is an 83-residue protein sequence, read N- to C-terminus: Disintegrin isoform D-3 (83 aa).

The 82-residue stretch at 2 to 83 folds into the Disintegrin domain; that stretch reads PPVCGNELLE…GKSSDCPWNH (82 aa). 7 disulfides stabilise this stretch: Cys-5–Cys-24, Cys-16–Cys-34, Cys-18–Cys-29, Cys-28–Cys-51, Cys-42–Cys-48, Cys-47–Cys-72, and Cys-60–Cys-79. A Cell attachment site motif is present at residues 64-66; that stretch reads RGD.

This sequence belongs to the venom metalloproteinase (M12B) family. P-II subfamily. P-IIa sub-subfamily. As to quaternary structure, monomer (disintegrin). As to expression, expressed by the venom gland.

It localises to the secreted. Functionally, inhibits fibrinogen interaction with platelets. Acts by binding to alpha-IIb/beta-3 (ITGA2B/ITGB3) on the platelet surface and inhibits aggregation induced by ADP, thrombin, platelet-activating factor and collagen. This is Disintegrin isoform D-3 from Bitis arietans (African puff adder).